We begin with the raw amino-acid sequence, 43 residues long: VTCDLLSFEAKGFAANHSICAAHCLVIGRKGGACQNGVCVCRN.

3 disulfides stabilise this stretch: C3–C34, C20–C39, and C24–C41.

The protein resides in the secreted. In terms of biological role, antibacterial protein. Strong activity against the Gram-positive bacteria M.luteus, B.megaterium and S.aureus. Reduced activity against Gram-positive bacterium B.subtilis and weak activity against Gram-negative bacterium X.japonicus. No detectable activity against the Gram-negative bacteria E.asbriae, E.coli, P.aeruginosa and S.marcescens. The protein is Defensin-B of Anomala cuprea (Cupreous chafer beetle).